The following is a 332-amino-acid chain: MRLLAFLSLLALVLQETGTASLPRKERKRREEQMPREGDSFEVLPLRNDVLNPDNYGEVIDLSNYEELTDYGDQLPEVKVTSLAPATSISPAKSTTAPGTPSSNPTMTRPTTAGLLLSSQPNHGLPTCLVCVCLGSSVYCDDIDLEDIPPLPRRTAYLYARFNRISRIRAEDFKGLTKLKRIDLSNNLISSIDNDAFRLLHALQDLILPENQLEALPVLPSGIEFLDVRLNRLQSSGIQPAAFRAMEKLQFLYLSDNLLDSIPGPLPLSLRSVHLQNNLIETMQRDVFCDPEEHKHTRRQLEDIRLDGNPINLSLFPSAYFCLPRLPIGRFT.

The first 19 residues, 1–19, serve as a signal peptide directing secretion; that stretch reads MRLLAFLSLLALVLQETGT. A disordered region spans residues 21 to 41; that stretch reads SLPRKERKRREEQMPREGDSF. A compositionally biased stretch (basic and acidic residues) spans 29-39; it reads RREEQMPREGD. Y65 and Y71 each carry sulfotyrosine. The tract at residues 86–106 is disordered; it reads ATSISPAKSTTAPGTPSSNPT. In terms of domain architecture, LRRNT spans 116-153; it reads LLSSQPNHGLPTCLVCVCLGSSVYCDDIDLEDIPPLPR. The residue at position 139 (Y139) is a Sulfotyrosine. LRR repeat units lie at residues 154-175, 178-199, 202-223, 248-269, 270-290, and 300-320; these read RTAY…DFKG, KLKR…AFRL, ALQD…PSGI, KLQF…LPLS, LRSV…VFCD, and QLED…PSAY. The cysteines at positions 289 and 322 are disulfide-linked. A glycan (N-linked (GlcNAc...) asparagine) is linked at N312.

Belongs to the small leucine-rich proteoglycan (SLRP) family. SLRP class III subfamily. In terms of assembly, homodimer. Post-translationally, O-glycosylated. In terms of processing, proteolytically cleaved by MMP1, MMP2, MMP3, MMP7, MMP8, MMP9, ADAMTS4, and ADAMTS5. Proteolytically cleaved by MMP13. The degradation of OPTC by proteases may contribute to osteoarthritis pathophysiology. Sulfated on tyrosine residues. As to expression, expressed in cartilage and synovial membranes (at protein level). Expressed in the retina, iris, ligament, skin and fetal liver (at protein level). Expressed in the retinal pigment epithelium (at protein level). Expressed in synovial fibroblasts and subchondral bone osteoblasts.

It localises to the secreted. It is found in the extracellular space. Its subcellular location is the extracellular matrix. Functionally, inhibits angiogenesis in the vitreous humor of the eye, and therefore represses neovascularization. Binds collagen fibrils. May be involved in collagen fiber organization via regulation of other members of the small leucine-rich repeat proteoglycan superfamily. The polypeptide is Opticin (OPTC) (Homo sapiens (Human)).